We begin with the raw amino-acid sequence, 418 residues long: Glutamyl-tRNA reductase (418 aa).

Residues 49-52 (TCNR), Ser107, 112-114 (EPQ), and Gln118 contribute to the substrate site. Residue Cys50 is the Nucleophile of the active site. 187-192 (GAGETI) provides a ligand contact to NADP(+).

Belongs to the glutamyl-tRNA reductase family. As to quaternary structure, homodimer.

It carries out the reaction (S)-4-amino-5-oxopentanoate + tRNA(Glu) + NADP(+) = L-glutamyl-tRNA(Glu) + NADPH + H(+). The protein operates within porphyrin-containing compound metabolism; protoporphyrin-IX biosynthesis; 5-aminolevulinate from L-glutamyl-tRNA(Glu): step 1/2. Its function is as follows. Catalyzes the NADPH-dependent reduction of glutamyl-tRNA(Glu) to glutamate 1-semialdehyde (GSA). This Vibrio parahaemolyticus serotype O3:K6 (strain RIMD 2210633) protein is Glutamyl-tRNA reductase.